We begin with the raw amino-acid sequence, 506 residues long: Anaerobic nitric oxide reductase transcription regulator NorR (506 aa).

Residue Asp57 is modified to 4-aspartylphosphate. The Sigma-54 factor interaction domain occupies 187 to 416 (MIGLSPAMTQ…LEHAIHRAVV (230 aa)). ATP contacts are provided by residues 215–222 (GETGTGKE) and 278–287 (ADNGTLFLDE). The H-T-H motif DNA-binding region spans 481-500 (WAASARALETDVANLHRLAK).

It participates in nitrogen metabolism; nitric oxide reduction. In terms of biological role, required for the expression of anaerobic nitric oxide (NO) reductase, acts as a transcriptional activator for at least the norVW operon. Activation also requires sigma-54. This Salmonella gallinarum (strain 287/91 / NCTC 13346) protein is Anaerobic nitric oxide reductase transcription regulator NorR.